We begin with the raw amino-acid sequence, 185 residues long: Ribosome-recycling factor (185 aa).

It belongs to the RRF family.

It localises to the cytoplasm. Responsible for the release of ribosomes from messenger RNA at the termination of protein biosynthesis. May increase the efficiency of translation by recycling ribosomes from one round of translation to another. The chain is Ribosome-recycling factor from Mannheimia succiniciproducens (strain KCTC 0769BP / MBEL55E).